We begin with the raw amino-acid sequence, 1229 residues long: Vacuolar protein sorting-associated protein 8 homolog (1229 aa).

Positions 67–89 are disordered; the sequence is EFGMPVPHATPTPSIGEDSTIRT. One copy of the CHCR repeat lies at 901-1063; it reads ETTRLLSLHY…ILPHQELQSI (163 aa). The RING-type; atypical zinc-finger motif lies at 1148–1189; the sequence is CSMCRQRLYDHSQVLIFGGCGHGIHEQCMEESETQFEECPRC.

Belongs to the VPS8 family. As to quaternary structure, component of the class C core vacuole/endosome tethering (CORVET) complex composed of at least Vps8, dor/Vps18, car/Vps33A and Vps16A; unlike in other species, Vps11 is not part of the Drosophila complex. Due to the reduced number of components the Drosophila CORVET complex is often referred to as the miniCORVET complex. Has a higher affinity than the homotypic fusion and vacuole protein sorting (HOPS) tethering complex-specific component lt/Vps41 for Vps16A, car/Vps33A and dor/Vps18, the core components shared by both tethering complexes.

It is found in the early endosome. Part of the class C core vacuole/endosome tethering (CORVET) complex involved in endo-lysosomal vesicle trafficking and lysosome biogenesis by facilitating docking and fusion of endosomal vesicles. The CORVET complex acts upstream of the homotypic fusion and vacuole protein sorting (HOPS) tethering complex but is not involved in autophagic flux. The CORVET complex may cooperate with the early endosomal tether Rbsn-5 to mediate endosomal fusion. As part of the CORVET complex recruited to endosomes by activated GTP-bound Rab5. Specifically required for endocytic trafficking in a subset of cells, such as hemocytes and nephrocytes, which are highly active in endocytosis. The sequence is that of Vacuolar protein sorting-associated protein 8 homolog from Drosophila melanogaster (Fruit fly).